A 378-amino-acid chain; its full sequence is Dual-specificity RNA methyltransferase RlmN (378 aa).

Catalysis depends on glutamate 95, which acts as the Proton acceptor. The Radical SAM core domain occupies 101–345 (EETRGTLCVS…TTIRKTRGDD (245 aa)). Cysteine 108 and cysteine 350 are disulfide-bonded. [4Fe-4S] cluster-binding residues include cysteine 115, cysteine 119, and cysteine 122. Residues 176 to 177 (GE), serine 208, 230 to 232 (SLH), and asparagine 307 each bind S-adenosyl-L-methionine. Cysteine 350 serves as the catalytic S-methylcysteine intermediate.

It belongs to the radical SAM superfamily. RlmN family. The cofactor is [4Fe-4S] cluster.

The protein localises to the cytoplasm. The catalysed reaction is adenosine(2503) in 23S rRNA + 2 reduced [2Fe-2S]-[ferredoxin] + 2 S-adenosyl-L-methionine = 2-methyladenosine(2503) in 23S rRNA + 5'-deoxyadenosine + L-methionine + 2 oxidized [2Fe-2S]-[ferredoxin] + S-adenosyl-L-homocysteine. It catalyses the reaction adenosine(37) in tRNA + 2 reduced [2Fe-2S]-[ferredoxin] + 2 S-adenosyl-L-methionine = 2-methyladenosine(37) in tRNA + 5'-deoxyadenosine + L-methionine + 2 oxidized [2Fe-2S]-[ferredoxin] + S-adenosyl-L-homocysteine. In terms of biological role, specifically methylates position 2 of adenine 2503 in 23S rRNA and position 2 of adenine 37 in tRNAs. m2A2503 modification seems to play a crucial role in the proofreading step occurring at the peptidyl transferase center and thus would serve to optimize ribosomal fidelity. The protein is Dual-specificity RNA methyltransferase RlmN of Burkholderia pseudomallei (strain K96243).